The following is a 35-amino-acid chain: Delta-theraphotoxin-Hm1a (35 aa).

3 cysteine pairs are disulfide-bonded: cysteine 2–cysteine 16, cysteine 9–cysteine 21, and cysteine 15–cysteine 28.

The protein belongs to the neurotoxin 10 (Hwtx-1) family. 09 (HaTx) subfamily. As to expression, expressed by the venom gland.

It localises to the secreted. Functionally, gating-modifier toxin that potently inhibits inactivation of the mammalian Nav1.1/SCN1A sodium channel (EC(50)=38 nM). Also moderately inhibits inactivation of Nav1.2/SCN2A (EC(50)=236 nM) and Nav1.3/SCN3A (EC(50)=220 nM) when the channels are expressed in oocytes without the beta-1 auxiliary subunit. Does not inhibit inactivation of Nav1.2/SCN2A when the channel is coexpressed with the beta-1 auxiliary subunit. When tested on Nav1.1/SCN1A channel, it enhances peak current amplitude and potently delays channel inactivation in a dose-dependent manner, leading to a large sustained current. It has no effect on the voltage-dependence of steady-state activation, and induces a depolarizing shift in the voltage dependence of inactivation. In addition, it does not modify the recovery from fast inactivation in Nav1.1/SCN1A. The binding affinity and subtype selectivity of the toxin towards Nav1.1/SCN1A channel is determined by residues within both the S1-S2 and S3-S4 loops of the domain IV voltage sensor of the channel. This toxin also weakly inhibits several subtypes of voltage-gated potassium channels. It moderately blocks Kv2.1/KCNB1 (23% inhibition at 100 nM), Kv2.2/KCNB2 (19.7% at 100 nM and 51% at 300 nM), Kv4.1/KCND1 (IC(50)=280 nM), Kv4.2/KCND2 (39% at 300 nM) and Kv4.3/KCND3 (43% at 300 nM). In vivo, intracerebroventricular injection into mice elicits convulsions, spasms, tremors and rapid death. When injected into mouse hindpaw, the toxin elicits an immediate and robust response to pain. However, intraplantar injection of toxin does not cause neurogenic inflammation or alter sensitivity to heat, indicative of a modality-specific effect on mechanosensitive neurons. In Dravet syndrome mice model, intracerebroventricular infusion of this peptide rescues mice from seizures and premature death. The chain is Delta-theraphotoxin-Hm1a from Heteroscodra maculata (Togo starburst tarantula).